The following is a 214-amino-acid chain: Proteasome subunit beta type-6 (214 aa).

The propeptide at 1 to 14 (MEAPEWLDNAVDLG) is removed in mature form. The active-site Nucleophile is Thr15.

It belongs to the peptidase T1B family. As to quaternary structure, the 26S proteasome consists of a 20S proteasome core and two 19S regulatory subunits. The 20S proteasome core is composed of 28 subunits that are arranged in four stacked rings, resulting in a barrel-shaped structure. The two end rings are each formed by seven alpha subunits, and the two central rings are each formed by seven beta subunits. The catalytic chamber with the active sites is on the inside of the barrel.

It localises to the cytoplasm. It is found in the nucleus. The enzyme catalyses Cleavage of peptide bonds with very broad specificity.. Functionally, the proteasome is a multicatalytic proteinase complex which is characterized by its ability to cleave peptides with Arg, Phe, Tyr, Leu, and Glu adjacent to the leaving group at neutral or slightly basic pH. The proteasome has an ATP-dependent proteolytic activity. The polypeptide is Proteasome subunit beta type-6 (psmB6) (Dictyostelium discoideum (Social amoeba)).